We begin with the raw amino-acid sequence, 514 residues long: Variant surface glycoprotein ILTAT 1.24 (514 aa).

An N-terminal signal peptide occupies residues 1–23 (MVYRNILQLSVLKVLLIVLIVEA). Cystine bridges form between cysteine 37–cysteine 162 and cysteine 143–cysteine 204. The N-linked (GlcNAc...) asparagine glycan is linked to asparagine 443. The tract at residues 451-476 (GVPVTQTQTAGADTTAEKCKGKGEKD) is disordered. Residues 455–464 (TQTQTAGADT) show a composition bias toward low complexity. The segment covering 465–476 (TAEKCKGKGEKD) has biased composition (basic and acidic residues). A lipid anchor (GPI-anchor amidated aspartate) is attached at aspartate 491. A propeptide spans 492-514 (SSILANKQFALSVASAAFVALLF) (removed in mature form).

The protein resides in the cell membrane. VSG forms a coat on the surface of the parasite. The trypanosome evades the immune response of the host by expressing a series of antigenically distinct VSGs from an estimated 1000 VSG genes. The chain is Variant surface glycoprotein ILTAT 1.24 from Trypanosoma brucei brucei.